Here is a 270-residue protein sequence, read N- to C-terminus: Energy-coupling factor transporter transmembrane protein EcfT (270 aa).

4 helical membrane-spanning segments follow: residues 36 to 56 (LFIV…LISI), 72 to 92 (PIFI…GGAN), 108 to 128 (LIMA…TSLL), and 248 to 268 (FIAS…RIWW).

This sequence belongs to the energy-coupling factor EcfT family. In terms of assembly, forms a stable energy-coupling factor (ECF) transporter complex composed of 2 membrane-embedded substrate-binding proteins (S component), 2 ATP-binding proteins (A component) and 2 transmembrane proteins (T component). May be able to interact with more than 1 S component at a time.

It localises to the cell membrane. Its function is as follows. Transmembrane (T) component of an energy-coupling factor (ECF) ABC-transporter complex. Unlike classic ABC transporters this ECF transporter provides the energy necessary to transport a number of different substrates. This is Energy-coupling factor transporter transmembrane protein EcfT from Clostridium kluyveri (strain ATCC 8527 / DSM 555 / NBRC 12016 / NCIMB 10680 / K1).